The chain runs to 767 residues: Phosphoribosylformylglycinamidine synthase subunit PurL (767 aa).

His-65 is an active-site residue. ATP-binding residues include Tyr-68 and Lys-112. Glu-114 contacts Mg(2+). Residues 115-118 (SHNH) and Arg-137 contribute to the substrate site. The Proton acceptor role is filled by His-116. A Mg(2+)-binding site is contributed by Asp-138. Position 262 (Gln-262) interacts with substrate. Asp-290 lines the Mg(2+) pocket. 334–336 (ESQ) lines the substrate pocket. Asp-522 and Gly-559 together coordinate ATP. Residue Asn-560 coordinates Mg(2+). Ser-562 is a binding site for substrate.

The protein belongs to the FGAMS family. In terms of assembly, monomer. Part of the FGAM synthase complex composed of 1 PurL, 1 PurQ and 2 PurS subunits.

It localises to the cytoplasm. It catalyses the reaction N(2)-formyl-N(1)-(5-phospho-beta-D-ribosyl)glycinamide + L-glutamine + ATP + H2O = 2-formamido-N(1)-(5-O-phospho-beta-D-ribosyl)acetamidine + L-glutamate + ADP + phosphate + H(+). The protein operates within purine metabolism; IMP biosynthesis via de novo pathway; 5-amino-1-(5-phospho-D-ribosyl)imidazole from N(2)-formyl-N(1)-(5-phospho-D-ribosyl)glycinamide: step 1/2. Its function is as follows. Part of the phosphoribosylformylglycinamidine synthase complex involved in the purines biosynthetic pathway. Catalyzes the ATP-dependent conversion of formylglycinamide ribonucleotide (FGAR) and glutamine to yield formylglycinamidine ribonucleotide (FGAM) and glutamate. The FGAM synthase complex is composed of three subunits. PurQ produces an ammonia molecule by converting glutamine to glutamate. PurL transfers the ammonia molecule to FGAR to form FGAM in an ATP-dependent manner. PurS interacts with PurQ and PurL and is thought to assist in the transfer of the ammonia molecule from PurQ to PurL. The protein is Phosphoribosylformylglycinamidine synthase subunit PurL of Renibacterium salmoninarum (strain ATCC 33209 / DSM 20767 / JCM 11484 / NBRC 15589 / NCIMB 2235).